Here is a 487-residue protein sequence, read N- to C-terminus: L-tartrate/succinate antiporter (487 aa).

14 helical membrane-spanning segments follow: residues 10–30 (YLAPLAVIAIIALLPLPAGLE), 33–53 (TWLYFAVFTGVIVGLILEPVP), 54–74 (GAVVAMVGISIIAILSPWLLF), 93–113 (WAVSGFSNSVIWLIFAAFMFG), 137–157 (TLFLGYAVMFSELILAPVTPS), 189–209 (IGSYIMWMGIVADCVTSAIFL), 236–256 (FLGMLPLSILLVLLVPWLAYV), 292–312 (LMVGALVLWIFGGDYIDAAMV), 313–333 (GYSVVALMLLLRIICWDDIVS), 340–360 (VFFWLASLITLATGLNNTGFI), 370–390 (SLSGYSPTIVMVALIVVFYLL), 393–413 (FFASATAYTSALAPMMIAAAL), 418–438 (IPLPVFCLMVGAAIGLGSILT), and 462–482 (LGAIFGLIFLVLLVITGLLWM).

It belongs to the SLC13A/DASS transporter (TC 2.A.47) family. DIT1 subfamily.

It is found in the cell inner membrane. The enzyme catalyses (2R,3R)-tartrate(out) + succinate(in) = (2R,3R)-tartrate(in) + succinate(out). Catalyzes the uptake of tartrate in exchange for intracellular succinate. Essential for anaerobic L-tartrate fermentation. This is L-tartrate/succinate antiporter (ttdT) from Escherichia coli O6:H1 (strain CFT073 / ATCC 700928 / UPEC).